The chain runs to 178 residues: ATP-dependent protease subunit HslV (178 aa).

T7 is a catalytic residue. The Na(+) site is built by G162, C165, and T168.

The protein belongs to the peptidase T1B family. HslV subfamily. In terms of assembly, a double ring-shaped homohexamer of HslV is capped on each side by a ring-shaped HslU homohexamer. The assembly of the HslU/HslV complex is dependent on binding of ATP.

Its subcellular location is the cytoplasm. The enzyme catalyses ATP-dependent cleavage of peptide bonds with broad specificity.. With respect to regulation, allosterically activated by HslU binding. Functionally, protease subunit of a proteasome-like degradation complex believed to be a general protein degrading machinery. The polypeptide is ATP-dependent protease subunit HslV (Herminiimonas arsenicoxydans).